The sequence spans 90 residues: DNA-directed RNA polymerase subunit Rpo11 (90 aa).

This sequence belongs to the archaeal Rpo11/eukaryotic RPB11/RPC19 RNA polymerase subunit family. As to quaternary structure, part of the RNA polymerase complex.

The protein localises to the cytoplasm. The catalysed reaction is RNA(n) + a ribonucleoside 5'-triphosphate = RNA(n+1) + diphosphate. DNA-dependent RNA polymerase (RNAP) catalyzes the transcription of DNA into RNA using the four ribonucleoside triphosphates as substrates. In Metallosphaera sedula (strain ATCC 51363 / DSM 5348 / JCM 9185 / NBRC 15509 / TH2), this protein is DNA-directed RNA polymerase subunit Rpo11.